A 484-amino-acid polypeptide reads, in one-letter code: MSVTSREQKFSGKYSSYTAQDRQGLVNAVTCVLSSSSDPVAVSSDYSNSLSIAREVNAYAKIAGCDWTYYVQKLEVTIGRNTDSLNLNAVPGTVVKKNIDIDLGPAKIVSRKHAAIRFNLESGSWELQIFGRNGAKVNFRRIPTGPDSPPTVLQSGCIIDIGGVQMIFILPEQETIISDYCLNHLMPKLLSTYGTNGNNNPLLRNIIEGSTYLREQRLQEEARLQQLDHLHTPLSSSSDVNPIGDPHGDTIMMEEDEEDENYTRGGIRPNTYTSSSNNAVTNGNVPHIENPSDLSLDENRYIKPPQSYASMITQAILSTPEGSISLADIYKFISDNYAFYRFSQMAWQNSVRHNLSLNKAFEKVPKRAGQQGKGMNWKISDEVRRDFLNKWNAGKLSKIRRGASVTRQLQLHMSKFGEIPAPESSSIDPRGIKAQKVKKSLQATSSILGESAPQLQRTQLTGQISTTTSMDVTTNANVNNSSLS.

The 67-residue stretch at 76–142 (VTIGRNTDSL…NGAKVNFRRI (67 aa)) folds into the FHA domain. The segment at residues 302–393 (IKPPQSYASM…RRDFLNKWNA (92 aa)) is a DNA-binding region (fork-head).

In terms of assembly, interacts (via FHA domain) with ECM30, GLN3, URE2, MPH1 AND FDO1. Interacts with the origin recognition complex (ORC) composed of ORC1 to ORC6.

It is found in the nucleus. The protein resides in the cytoplasm. The protein localises to the cytosol. Transcription factor that regulates the expression of the CLB2 cluster of genes during the G2/M phase of the mitotic cell cycle. The CLB2 cluster of genes includes mitotic regulators such as CLB1, CLB2, CDC5 and CDC20 as well as SWI5 and ACE2, transcription factors required for the subsequent temporal wave of cell cycle regulated gene expression in the M/G1 phase interval. Involved in HMRa silencing. FKH1 and FKH2 associate with the coding regions of active genes and influence, in opposing ways, transcriptional elongation and termination, and coordinate early transcription elongation and pre-mRNA processing. Both FKH1 and FKH2 play a role as regulators of lifespan in collaboration with the anaphase-promoting complex (APC), likely through combined regulation of stress response, genomic stability, and cell cycle regulation. FKH1 and FKH2 function also in controlling yeast cell morphology by preventing preudohyphal growth. Acts as a rate-limiting replication origin activator via its interaction with the origin recognition complex (ORC). Plays a transcription-independent role in recombination donor preference during mating-type switching through binding to the recombination enhancer (RE), a 700-bp cis-acting element that controls recombination along the left arm of chromosome III. In Saccharomyces cerevisiae (strain ATCC 204508 / S288c) (Baker's yeast), this protein is Fork head protein homolog 1.